The following is a 614-amino-acid chain: Glutamine--fructose-6-phosphate aminotransferase [isomerizing] (614 aa).

Cysteine 2 (nucleophile; for GATase activity) is an active-site residue. In terms of domain architecture, Glutamine amidotransferase type-2 spans 2–223 (CGIIGYIGRR…DGEMAVVTRD (222 aa)). SIS domains lie at 292-431 (YLDR…GRTI) and 463-604 (IAVK…VDRP). Lysine 609 acts as the For Fru-6P isomerization activity in catalysis.

Homodimer.

The protein localises to the cytoplasm. The enzyme catalyses D-fructose 6-phosphate + L-glutamine = D-glucosamine 6-phosphate + L-glutamate. Functionally, catalyzes the first step in hexosamine metabolism, converting fructose-6P into glucosamine-6P using glutamine as a nitrogen source. This is Glutamine--fructose-6-phosphate aminotransferase [isomerizing] from Chlorobaculum tepidum (strain ATCC 49652 / DSM 12025 / NBRC 103806 / TLS) (Chlorobium tepidum).